A 276-amino-acid chain; its full sequence is Octanoyltransferase LipM (276 aa).

The 215-residue stretch at 33-247 (GELKPTLRFY…GFKDAFSLTF (215 aa)) folds into the BPL/LPL catalytic domain. Cys150 functions as the Acyl-thioester intermediate in the catalytic mechanism.

The protein belongs to the octanoyltransferase LipM family. As to quaternary structure, monomer.

It catalyses the reaction octanoyl-[ACP] + L-lysyl-[protein] = N(6)-octanoyl-L-lysyl-[protein] + holo-[ACP] + H(+). It participates in protein modification; protein lipoylation via endogenous pathway; protein N(6)-(lipoyl)lysine from octanoyl-[acyl-carrier-protein]. Functionally, catalyzes the transfer of endogenously produced octanoic acid from octanoyl-acyl-carrier-protein onto the lipoyl domain of GcvH, an intermediate carrier during protein lipoylation. The protein is Octanoyltransferase LipM of Exiguobacterium sp. (strain ATCC BAA-1283 / AT1b).